Reading from the N-terminus, the 389-residue chain is Tubulin-like protein CetZ3 (389 aa).

GTP is bound by residues Gln10 to Lys14, Gly110 to Gly112, Glu142, Asn169, and Asn187.

Belongs to the CetZ family.

It is found in the cytoplasm. Functionally, involved in cell shape control. This chain is Tubulin-like protein CetZ3, found in Haloferax volcanii (strain ATCC 29605 / DSM 3757 / JCM 8879 / NBRC 14742 / NCIMB 2012 / VKM B-1768 / DS2) (Halobacterium volcanii).